A 143-amino-acid chain; its full sequence is Transcriptional regulator SlyA (143 aa).

The HTH marR-type domain maps to 2 to 135 (ESTLGSDLAR…LSGLIDKLEK (134 aa)). A DNA-binding region (H-T-H motif) is located at residues 49–72 (QIQLAKAIGIEQPSLVRTLDQLEE).

It belongs to the SlyA family. As to quaternary structure, homodimer.

Transcription regulator that can specifically activate or repress expression of target genes. The chain is Transcriptional regulator SlyA from Yersinia pestis (strain Pestoides F).